Reading from the N-terminus, the 367-residue chain is GMP synthase [glutamine-hydrolyzing] subunit B (367 aa).

The GMPS ATP-PPase domain occupies 2 to 190 (FDPASFVEEI…LKLPKEISER (189 aa)). 29 to 35 (SGGVDST) provides a ligand contact to ATP.

Heterodimer composed of a glutamine amidotransferase subunit (A) and a GMP-binding subunit (B).

The catalysed reaction is XMP + L-glutamine + ATP + H2O = GMP + L-glutamate + AMP + diphosphate + 2 H(+). The protein operates within purine metabolism; GMP biosynthesis; GMP from XMP (L-Gln route): step 1/1. Catalyzes the synthesis of GMP from XMP. This Saccharolobus solfataricus (strain ATCC 35092 / DSM 1617 / JCM 11322 / P2) (Sulfolobus solfataricus) protein is GMP synthase [glutamine-hydrolyzing] subunit B (guaAB).